The primary structure comprises 318 residues: Pantothenate kinase (318 aa).

Residue 96–103 (GSVAVGKS) coordinates ATP.

The protein belongs to the prokaryotic pantothenate kinase family.

It localises to the cytoplasm. The enzyme catalyses (R)-pantothenate + ATP = (R)-4'-phosphopantothenate + ADP + H(+). Its pathway is cofactor biosynthesis; coenzyme A biosynthesis; CoA from (R)-pantothenate: step 1/5. The chain is Pantothenate kinase from Bradyrhizobium diazoefficiens (strain JCM 10833 / BCRC 13528 / IAM 13628 / NBRC 14792 / USDA 110).